A 245-amino-acid polypeptide reads, in one-letter code: S-methyl-5'-thioinosine phosphorylase (245 aa).

Phosphate contacts are provided by residues Thr-10 and 52 to 53; that span reads RH. Met-185 contributes to the substrate binding site. Phosphate is bound at residue Thr-186. Residue 209–211 coordinates substrate; that stretch reads NPA.

It belongs to the PNP/MTAP phosphorylase family. MTAP subfamily. Homotrimer.

The catalysed reaction is S-methyl-5'-thioinosine + phosphate = 5-(methylsulfanyl)-alpha-D-ribose 1-phosphate + hypoxanthine. Its pathway is purine metabolism; purine nucleoside salvage. Its function is as follows. Catalyzes the reversible phosphorylation of S-methyl-5'-thioinosine (MTI) to hypoxanthine and 5-methylthioribose-1-phosphate. Involved in the breakdown of S-methyl-5'-thioadenosine (MTA), a major by-product of polyamine biosynthesis. Catabolism of (MTA) occurs via deamination to MTI and phosphorolysis to hypoxanthine. Involved in quorum sensing. In Pseudomonas aeruginosa (strain ATCC 15692 / DSM 22644 / CIP 104116 / JCM 14847 / LMG 12228 / 1C / PRS 101 / PAO1), this protein is S-methyl-5'-thioinosine phosphorylase.